Consider the following 572-residue polypeptide: Formate--tetrahydrofolate ligase (572 aa).

Residue 65-72 (TPLGEGKT) coordinates ATP.

Belongs to the formate--tetrahydrofolate ligase family.

It carries out the reaction (6S)-5,6,7,8-tetrahydrofolate + formate + ATP = (6R)-10-formyltetrahydrofolate + ADP + phosphate. It participates in one-carbon metabolism; tetrahydrofolate interconversion. This Chloroflexus aurantiacus (strain ATCC 29366 / DSM 635 / J-10-fl) protein is Formate--tetrahydrofolate ligase.